The chain runs to 256 residues: 5'-nucleotidase SurE (256 aa).

Residues aspartate 8, aspartate 9, serine 40, and asparagine 92 each coordinate a divalent metal cation.

Belongs to the SurE nucleotidase family. It depends on a divalent metal cation as a cofactor.

It is found in the cytoplasm. It carries out the reaction a ribonucleoside 5'-phosphate + H2O = a ribonucleoside + phosphate. Its function is as follows. Nucleotidase that shows phosphatase activity on nucleoside 5'-monophosphates. In Rhizobium meliloti (strain 1021) (Ensifer meliloti), this protein is 5'-nucleotidase SurE.